The following is a 276-amino-acid chain: MSLSQPLFIKLLLKHWKIHNIPVSAGYLTYSTTLAIVPLVMVVFSIFTAFPIFQEATEQLKTLIYDNFAPNAGDMVEEYIDLFVANSKKMGIVSTIGLVVVALMLIQSIDETLNKMWRNHRKRSIFISFLLYAVILFIAPLLAGGSIAISSYIFSMAIFNENGLLSFSQQLLQYTPFLLIWLLFTTVYWLVPNTKVNILHAMLGAIVAAIFFTLGKQAFVWYISTFPSYQAIYGALAVLPIMLLWIHLSWQVVLFGGLITSTLNVYNEMKKGKLNL.

The next 7 membrane-spanning stretches (helical) occupy residues 33-53, 90-110, 125-145, 147-167, 171-191, 203-223, and 239-259; these read TLAI…FPIF, MGIV…QSID, IFIS…LAGG, IAIS…LLSF, LLQY…YWLV, LGAI…VWYI, and LPIM…GGLI.

It belongs to the UPF0761 family.

The protein resides in the cell inner membrane. This is UPF0761 membrane protein APL_1950 from Actinobacillus pleuropneumoniae serotype 5b (strain L20).